We begin with the raw amino-acid sequence, 265 residues long: Type 1 encapsulin shell protein (265 aa).

FMN-binding positions include 79-81, tryptophan 87, and 90-94; these read RAT and DNLER. Residues 184-189 form a pore-forming loop region; sequence EAGHYP. Residue glutamate 235 coordinates FMN.

This sequence belongs to the encapsulin family. Family 1 subfamily. Homomultimeric. This encapsulin nanocompartment is formed by 60 subunits; monomers form 12 pentamers which assemble to form shells. There are 12 pores where the pentamers meet as well as 3-fold axis channels and dimer channels; none are larger than 3-4 Angstroms in diameter. The N-terminus of the protein is inside the shell, the C-terminus is outside. Probably 3, 4 or 5 Flp cargo decamers bind inside the encapulin nanocompartment. It depends on FMN as a cofactor.

The protein resides in the encapsulin nanocompartment. With respect to regulation, proteolysis activated by calcium and cobalt. Its function is as follows. Shell component of a type 1 encapsulin nanocompartment. Assembles into proteinaceous shells 23-24 nm in diameter with 2-2.5 nm thick walls. Cargo protein Flp (ferritin-like protein, probably stores iron) is targeted to the interior via its C-terminal extension; empty intact shells can be isolated in the absence of cargo protein. Fe(2+) may be able to pass though the 5-fold and dimer channels in the protein shell. Protease that exhibits activity toward chymotrypsin and trypsin substrates. Probably does not have antibacterial activity. The sequence is that of Type 1 encapsulin shell protein from Thermotoga maritima (strain ATCC 43589 / DSM 3109 / JCM 10099 / NBRC 100826 / MSB8).